The following is a 355-amino-acid chain: Histidinol-phosphate aminotransferase (355 aa).

Lysine 222 is modified (N6-(pyridoxal phosphate)lysine).

Belongs to the class-II pyridoxal-phosphate-dependent aminotransferase family. Histidinol-phosphate aminotransferase subfamily. The cofactor is pyridoxal 5'-phosphate.

The catalysed reaction is L-histidinol phosphate + 2-oxoglutarate = 3-(imidazol-4-yl)-2-oxopropyl phosphate + L-glutamate. It participates in amino-acid biosynthesis; L-histidine biosynthesis; L-histidine from 5-phospho-alpha-D-ribose 1-diphosphate: step 7/9. The chain is Histidinol-phosphate aminotransferase from Natronomonas pharaonis (strain ATCC 35678 / DSM 2160 / CIP 103997 / JCM 8858 / NBRC 14720 / NCIMB 2260 / Gabara) (Halobacterium pharaonis).